The chain runs to 171 residues: S-ribosylhomocysteine lyase (171 aa).

Positions 54, 58, and 128 each coordinate Fe cation.

Belongs to the LuxS family. Homodimer. It depends on Fe cation as a cofactor.

It carries out the reaction S-(5-deoxy-D-ribos-5-yl)-L-homocysteine = (S)-4,5-dihydroxypentane-2,3-dione + L-homocysteine. Involved in the synthesis of autoinducer 2 (AI-2) which is secreted by bacteria and is used to communicate both the cell density and the metabolic potential of the environment. The regulation of gene expression in response to changes in cell density is called quorum sensing. Catalyzes the transformation of S-ribosylhomocysteine (RHC) to homocysteine (HC) and 4,5-dihydroxy-2,3-pentadione (DPD). The polypeptide is S-ribosylhomocysteine lyase (Edwardsiella ictaluri (strain 93-146)).